The following is a 598-amino-acid chain: Serine/threonine-protein kinase PLK1 (598 aa).

The segment at 1–23 (MAQVAGKKLTVAPEAAKPPGIPG) is disordered. T10 carries the phosphothreonine; by PKA; in vitro modification. Phosphoserine occurs at positions 25 and 26. One can recognise a Protein kinase domain in the interval 44 to 296 (YLRGRFLGKG…IDDLLNDEFF (253 aa)). Residues 50 to 58 (LGKGGFAKC), K73, and E122 each bind ATP. Residue D167 is the Proton acceptor of the active site. ATP-binding positions include 169-172 (KLGN) and D185. The segment at 185-212 (DFGLATKVEYDGERKKTLCGTPNYIAPE) is activation loop. A Phosphothreonine; by PKA modification is found at T201. 2 positions are modified to phosphoserine; by autocatalysis: S260 and S326. A D-box that targets the protein for proteasomal degradation in anaphase motif is present at residues 328–331 (RKPL). At S340 the chain carries Phosphoserine; by CDK1. The 79-residue stretch at 404–482 (WISKWVDYSD…LKYFRNYMSE (79 aa)) folds into the POLO box 1 domain. Residues 487-501 (AGANTTPREGDELAR) are linker. In terms of domain architecture, POLO box 2 spans 504–586 (FLRTWFRTRS…ARTMVEKLQS (83 aa)). The segment at 532 to 534 (HTK) is important for interaction with phosphorylated proteins.

It belongs to the protein kinase superfamily. Ser/Thr protein kinase family. In terms of assembly, interacts with plk1 and kif2a. Interacts with fbxo5. Activated by phosphorylation on Thr-201 during M phase. Phosphorylated by stk10, leading to activation during oocyte maturation. Post-translationally, ubiquitinated by the anaphase promoting complex/cyclosome (APC/C) in anaphase and following DNA damage, leading to its degradation by the proteasome. Protein levels are down-regulated by proteasomal degradation in anaphase.

Its subcellular location is the nucleus. It is found in the cytoplasm. It localises to the cytoskeleton. The protein localises to the microtubule organizing center. The protein resides in the centrosome. Its subcellular location is the spindle. It is found in the midbody. It carries out the reaction L-seryl-[protein] + ATP = O-phospho-L-seryl-[protein] + ADP + H(+). The enzyme catalyses L-threonyl-[protein] + ATP = O-phospho-L-threonyl-[protein] + ADP + H(+). Its activity is regulated as follows. Activated by phosphorylation of Thr-201. Its function is as follows. Serine/threonine-protein kinase that performs several important functions throughout M phase of the cell cycle, including the regulation of centrosome maturation and spindle assembly, the removal of cohesins from chromosome arms, the inactivation of anaphase-promoting complex/cyclosome (APC/C) inhibitors, and the regulation of mitotic exit and cytokinesis. Polo-like kinase proteins act by binding and phosphorylating proteins that are already phosphorylated on a specific motif recognized by the POLO box domains. Phosphorylates cdc25, pkmyt1/myt1, stag2/sa2, tpx2. Plays multiple essential roles during mitosis. Phosphorylates the N-terminal domain of cdc25, which leads to cyclin b-cdc2 activation and mitotic entry. Also required for organization of bipolar spindles, and for exit from mitosis. Involved in kinetochore functions and sister chromatid cohesion by phosphorylating stag2/sa2. The protein is Serine/threonine-protein kinase PLK1 (plk1) of Xenopus laevis (African clawed frog).